We begin with the raw amino-acid sequence, 495 residues long: DDB1- and CUL4-associated factor 4 (495 aa).

The span at 1-17 (MNKSRWQSRRRHGRRSH) shows a compositional bias: basic residues. Positions 1 to 66 (MNKSRWQSRR…TAGTSSVPEL (66 aa)) are disordered. Basic and acidic residues predominate over residues 24–34 (RLRDSEDRSDS). A compositionally biased stretch (low complexity) spans 51 to 62 (PSTSSGTAGTSS). WD repeat units lie at residues 368–407 (FHDS…CVRQ) and 410–451 (GHVN…LLRT).

Interacts with DDB1 and CUL4A.

It functions in the pathway protein modification; protein ubiquitination. May function as a substrate receptor for CUL4-DDB1 E3 ubiquitin-protein ligase complex. The protein is DDB1- and CUL4-associated factor 4 (DCAF4) of Homo sapiens (Human).